A 156-amino-acid polypeptide reads, in one-letter code: Small ribosomal subunit protein uS7 (156 aa).

The protein belongs to the universal ribosomal protein uS7 family. As to quaternary structure, part of the 30S ribosomal subunit. Contacts proteins S9 and S11.

In terms of biological role, one of the primary rRNA binding proteins, it binds directly to 16S rRNA where it nucleates assembly of the head domain of the 30S subunit. Is located at the subunit interface close to the decoding center, probably blocks exit of the E-site tRNA. The sequence is that of Small ribosomal subunit protein uS7 from Methylibium petroleiphilum (strain ATCC BAA-1232 / LMG 22953 / PM1).